The primary structure comprises 732 residues: MERQVLLSEPEEAAALYRGLSRQPALSAACLGPEVTTQYGGRYRTVHTEWTQRDLERMENIRFCRQYLVFHDGDSVVFAGPAGNSVETRGELLSRESPSGTMKAVLRKAGGTGTAEEKQFLEVWEKNRKLKSFNLSALEKHGPVYEDDCFGCLSWSHSETHLLYVADKKRPKAESFFQTKALDVTGSDDEMARTKKPDQAIKGDQFLFYEDWGENMVSKSTPVLCVLDIESGNISVLEGVPESVSPGQAFWAPGDTGVVFVGWWHEPFRLGIRFCTNRRSALYYVDLTGGKCELLSDESVAVTSPRLSPDQCRIVYLRFPSLVPHQQCGQLCLYDWYTRVTSVVVDIVPRQLGEDFSGIYCSLLPLGCWSADSQRVVFDSPQRSRQDLFAVDTQMGSVTSLTAGGSGGSWKLLTIDRDLMVVQFSTPSVPPSLKVGFLPPAGKEQAVSWVSLEEAEPFPDISWSIRVLQPPPQQEHVQYAGLDFEAILLQPSNSPEKTQVPMVVMPHGGPHSSFVTAWMLFPAMLCKMGFAVLLVNYRGSTGFGQDSILSLPGNVGHQDVKDVQFAVEQVLQEEHFDAGRVALMGGSHGGFLSCHLIGQYPETYSACVVRNPVINIASMMGSTDIPDWCMVEAGFSYSSDCLPDLSVWAAMLDKSPIKYAPQVKTPLLLMLGQEDRRVPFKQGMEYYRVLKARNVPVRLLLYPKSTHALSEVEVESDSFMNAVLWLCTHLGS.

N-acetylmethionine is present on methionine 1. Position 187 is a phosphoserine (serine 187). Residues serine 587, aspartate 675, and histidine 707 each act as charge relay system in the active site.

This sequence belongs to the peptidase S9C family. In terms of assembly, homotetramer. Expressed in the liver (at protein level).

It is found in the cytoplasm. It catalyses the reaction Cleavage of an N-acetyl or N-formyl amino acid from the N-terminus of a polypeptide.. Homotetramerization is required for activity. Tetramerization results in the formation of a gated channel which is involved in substrate selection and substrate access to the catalytic sites. This enzyme catalyzes the hydrolysis of the N-terminal peptide bond of an N-acetylated peptide to generate an N-acetylated amino acid and a peptide with a free N-terminus. It preferentially cleaves off Ac-Ala, Ac-Met and Ac-Ser. Also, involved in the degradation of oxidized and glycated proteins. The polypeptide is Acylamino-acid-releasing enzyme (APEH) (Sus scrofa (Pig)).